Reading from the N-terminus, the 222-residue chain is UPF0758 protein YE0063 (222 aa).

The MPN domain maps to 100–222; it reads VLQNPEITQK…CVSFAERGWL (123 aa). Zn(2+)-binding residues include histidine 171, histidine 173, and aspartate 184. The short motif at 171–184 is the JAMM motif element; it reads HNHPSGKAEPSQAD.

It belongs to the UPF0758 family. YicR subfamily.

The protein is UPF0758 protein YE0063 of Yersinia enterocolitica serotype O:8 / biotype 1B (strain NCTC 13174 / 8081).